The sequence spans 1041 residues: Collagen alpha-2(I) chain (1041 aa).

Residues 1 to 1041 are disordered; that stretch reads SGGFDFSFLP…FGYEGDFYRA (1041 aa). Residues proline 10, proline 13, proline 39, and proline 45 each carry the 4-hydroxyproline modification. Low complexity-rich tracts occupy residues 25 to 45 and 55 to 76; these read LGPG…SGAP and EPGE…PPGK. The span at 77–91 shows a compositional bias: basic and acidic residues; the sequence is AGEDGHPGKPGRPGE. Residue lysine 113 is modified to 5-hydroxylysine; alternate. Lysine 113 carries an O-linked (Gal...) hydroxylysine; alternate glycan. Composition is skewed to low complexity over residues 174 to 189 and 235 to 256; these read SVGP…SAGP and PGAN…AGAP. The span at 290–299 shows a compositional bias: gly residues; it reads GESGGKGEPG. Positions 300-310 are enriched in low complexity; that stretch reads SAGPQGPPGSS. Residues 332–341 show a composition bias toward gly residues; the sequence is GLRGGPGSRG. The span at 354–370 shows a compositional bias: low complexity; it reads PAGARGASGPAGVRGPS. Proline 376 and proline 379 each carry 4-hydroxyproline. Residues 405–424 are compositionally biased toward low complexity; that stretch reads LPGIDGRPGPIGPAGARGEA. A compositionally biased stretch (gly residues) spans 466-475; it reads GVQGGKGEQG. Composition is skewed to low complexity over residues 522-539 and 551-561; these read SGES…SRGP and EPGVVGAPGTA. Gly residues predominate over residues 562 to 571; it reads GPAGSGGLPG. Low complexity-rich tracts occupy residues 594–638 and 645–665; these read VGTT…PRGS and VGPA…QPGA. The span at 666–675 shows a compositional bias: basic and acidic residues; it reads KGERGTKGPK. A compositionally biased stretch (low complexity) spans 683-693; that stretch reads PTGPVGSAGPA. Gly residues predominate over residues 703 to 712; that stretch reads GSRGDGGPPG. A compositionally biased stretch (low complexity) spans 714–723; it reads TGFPGAAGRT. Positions 754–768 are enriched in gly residues; that stretch reads GPVGRGETGAGGPPG. 2 stretches are compositionally biased toward low complexity: residues 769–803 and 811–821; these read FTGE…LGLP and LPGVAGAVGEP. Residues 822–840 show a composition bias toward gly residues; the sequence is GPLGIGPPGARGPSGGVPG. Composition is skewed to low complexity over residues 874–887 and 903–918; these read YAGN…AGAP and EPGP…ALGP. A compositionally biased stretch (basic and acidic residues) spans 928–939; sequence RGDKGEAGDKGP. The segment covering 1013 to 1023 has biased composition (pro residues); it reads PAGPPGPPGPP.

It belongs to the fibrillar collagen family. In terms of assembly, trimers of one alpha 2(I) and two alpha 1(I) chains. Interacts (via C-terminus) with TMEM131 (via PapD-L domain); the interaction is direct and is involved in assembly and TRAPPIII ER-to-Golgi transport complex-dependent secretion of collagen. In terms of processing, prolines at the third position of the tripeptide repeating unit (G-X-Y) are hydroxylated in some or all of the chains. As to expression, expressed in bones.

Its subcellular location is the secreted. The protein resides in the extracellular space. It is found in the extracellular matrix. Type I collagen is a member of group I collagen (fibrillar forming collagen). This Paramylodon harlani (Harlan's ground sloth) protein is Collagen alpha-2(I) chain.